A 772-amino-acid chain; its full sequence is MSSTAQKNSLSPTGNGVTKRKSGSAACVHCHRRKVRCDARIVGLPCSNCRSSGKTDCRIHEKKKRLAVRSILNPVPIRCRPPSTSEHVPEASPPSTISEPTAFTTAFRGVQPEAAAPPASVAPNVQSKAQHLHSNSYSQTSPQAQECHLPPASDRFAEQDAHADFEKRLVKLIDDEEGSGPREIQRGVRAIYVGHELSNMSFLIRQQRDKDDDVYHFAGSEIPRRQLKTGHDQLLVDALTLPEPALVDELVQAYFTHVNPGYPIVEEDQFMSQYRNRDPSDPPPILLLQAILLVGCHVTHPKEERDALKAIFFRRAKWLFDNRIERNRDTLVQAALLLTWHSDSPDDDVSANAHYWVGVAARIATGLGMHRNPVSSRFAPRDRRMWRRLWYILVQLDVMVSLSYGRPQAINLEDSDVSPLTASDFEGCGARVQTDYVIHFSELCTMISYIVRERFGLRVSSERRKAALQEADEALANWSLRLPDHLRLRASDMDPWSAMLHLTYNNFLILLHRPHPRASAYSDDYGPHDAEICSAAAGVITSIFEELRLNDRLKYLWYSGVHTLFTAMIQVRVELRFSNPVLAINALRRFDSASCSLRELAKYWSHATTILRLFEDSKRLQKDLRLATSERSRPFSSTQDQPQAQALDQNKNQHQHSSADAPVQPPQPDRLLPSYDSPTPDSTSLPQTAVSPHQNLTFDSWIPSTNLATVDPMDQPREFLDWRQLFSFTDPDQPVLPMSMDGLPELEDEWRQIYWQETPMSDLLQDGGWMHG.

The segment covering 1–16 has biased composition (polar residues); that stretch reads MSSTAQKNSLSPTGNG. Positions 1-23 are disordered; the sequence is MSSTAQKNSLSPTGNGVTKRKSG. Residues 26–59 constitute a DNA-binding region (zn(2)-C6 fungal-type); that stretch reads ACVHCHRRKVRCDARIVGLPCSNCRSSGKTDCRI. Disordered stretches follow at residues 78–99, 114–148, and 627–690; these read RCRPPSTSEHVPEASPPSTISE, AAAPPASVAPNVQSKAQHLHSNSYSQTSPQAQECH, and ATSE…QTAV. The segment covering 114–123 has biased composition (low complexity); the sequence is AAAPPASVAP. 2 stretches are compositionally biased toward polar residues: residues 124–144 and 634–658; these read NVQSKAQHLHSNSYSQTSPQA and PFSSTQDQPQAQALDQNKNQHQHSS. Residues 671–686 are compositionally biased toward low complexity; sequence LLPSYDSPTPDSTSLP.

It localises to the nucleus. In terms of biological role, positively regulates the expression of genes involved in the catabolism of certain amides, omega amino acids, and lactams. The sequence is that of Acetamidase regulatory protein (amdR) from Aspergillus fumigatus (strain ATCC MYA-4609 / CBS 101355 / FGSC A1100 / Af293) (Neosartorya fumigata).